We begin with the raw amino-acid sequence, 620 residues long: MAIEKLPPQLANQIAAGEVVERPASVIKELVENSLDAGATRVDIEIDKGGSKLIRIRDNGFGIPKQDLSLALSRHATSKLKSLDDLEAIMSFGFRGEALASISSVSRLTLTSRTETQAEAWQAKAEGTEMAVQILPAAHPVGTTIEAVDLFFNTPARRRFLKSDKTEFTHIDEWLKRIALVRRDIHFTLKHNGKSVRNYRPAMTEIQYLQRLGQVCGKAFAETCLHISCSHNDLTLSGYLQAPGAASGYCETQYFYVNGRLVKDRLVNHAVRQAFSEYAAGVSPGYVLMLELDPHQVDVNVHPAKHEVRFHQSRYVHDYILQALQSAMAQSSELGLEAQPEPTDESGAAFESNSTNSNVSSTSYSEPNTKPVAVNERPLTTTATSYNQGQSSYRTPLRPATHRADVELPSQSSLEAYASLLSRSSAEPASGKVVSNPHASAVSDASVKMPAVLADKYWVIVEEDSIRLLSIADVIKETARQQIQAKLAQGLVGQPLLMPVAVPVDDNWNEVIETREILLRKLGIELSIRLGQLIIKKVPPYLRDSQLAVLIPELLQWIRFEEPSDDALVHWLTTQASSRFTASAEAWLAFSTLDSSAKSALYNQSQELPWQQWMKESQSD.

Residues 332-402 (SELGLEAQPE…YRTPLRPATH (71 aa)) form a disordered region. A compositionally biased stretch (low complexity) spans 352-365 (SNSTNSNVSSTSYS). Polar residues predominate over residues 378 to 394 (PLTTTATSYNQGQSSYR).

Belongs to the DNA mismatch repair MutL/HexB family.

In terms of biological role, this protein is involved in the repair of mismatches in DNA. It is required for dam-dependent methyl-directed DNA mismatch repair. May act as a 'molecular matchmaker', a protein that promotes the formation of a stable complex between two or more DNA-binding proteins in an ATP-dependent manner without itself being part of a final effector complex. The sequence is that of DNA mismatch repair protein MutL from Shewanella piezotolerans (strain WP3 / JCM 13877).